A 457-amino-acid chain; its full sequence is Argininosuccinate lyase (457 aa).

This sequence belongs to the lyase 1 family. Argininosuccinate lyase subfamily.

Its subcellular location is the cytoplasm. The enzyme catalyses 2-(N(omega)-L-arginino)succinate = fumarate + L-arginine. It functions in the pathway amino-acid biosynthesis; L-arginine biosynthesis; L-arginine from L-ornithine and carbamoyl phosphate: step 3/3. This chain is Argininosuccinate lyase, found in Exiguobacterium sibiricum (strain DSM 17290 / CCUG 55495 / CIP 109462 / JCM 13490 / 255-15).